The chain runs to 131 residues: Fumarate reductase subunit C (131 aa).

3 helical membrane-spanning segments follow: residues 30 to 50, 57 to 77, and 109 to 129; these read EGTA…LFAL, WMGF…LIAL, and IIKG…YVAL.

It belongs to the FrdC family. Part of an enzyme complex containing four subunits: a flavoprotein (FrdA), an iron-sulfur protein (FrdB), and two hydrophobic anchor proteins (FrdC and FrdD).

Its subcellular location is the cell inner membrane. Two distinct, membrane-bound, FAD-containing enzymes are responsible for the catalysis of fumarate and succinate interconversion; fumarate reductase is used in anaerobic growth, and succinate dehydrogenase is used in aerobic growth. Anchors the catalytic components of the fumarate reductase complex to the cell inner membrane, binds quinones. The chain is Fumarate reductase subunit C from Citrobacter koseri (strain ATCC BAA-895 / CDC 4225-83 / SGSC4696).